The sequence spans 319 residues: D-alanine--D-alanine ligase (319 aa).

The ATP-grasp domain maps to 120–315 (KRVLAQAGVP…YPELLRRLVE (196 aa)). Residue 147 to 198 (DPPFFVKPANTGSSVGISRVERFQDLEAALALAFRYDEKAVVEKALSPVREL) coordinates ATP. The Mg(2+) site is built by D270, E282, and N284.

The protein belongs to the D-alanine--D-alanine ligase family. Mg(2+) serves as cofactor. It depends on Mn(2+) as a cofactor.

It localises to the cytoplasm. It catalyses the reaction 2 D-alanine + ATP = D-alanyl-D-alanine + ADP + phosphate + H(+). It functions in the pathway cell wall biogenesis; peptidoglycan biosynthesis. In terms of biological role, cell wall formation. The protein is D-alanine--D-alanine ligase of Thermus thermophilus (strain ATCC 27634 / DSM 579 / HB8).